The primary structure comprises 306 residues: Agmatinase (306 aa).

His-126, Asp-149, His-151, Asp-153, Asp-230, and Asp-232 together coordinate Mn(2+).

It belongs to the arginase family. Agmatinase subfamily. Mn(2+) serves as cofactor.

It carries out the reaction agmatine + H2O = urea + putrescine. Its pathway is amine and polyamine biosynthesis; putrescine biosynthesis via agmatine pathway; putrescine from agmatine: step 1/1. Catalyzes the formation of putrescine from agmatine. The protein is Agmatinase of Shigella boydii serotype 18 (strain CDC 3083-94 / BS512).